A 181-amino-acid chain; its full sequence is Ribonuclease M5 (181 aa).

Residues 3–86 enclose the Toprim domain; sequence KEVIVVEGRD…AYISQEEGTK (84 aa). Mg(2+)-binding residues include glutamate 9, aspartate 55, and aspartate 57.

The protein belongs to the ribonuclease M5 family. Mg(2+) serves as cofactor.

Its subcellular location is the cytoplasm. It catalyses the reaction Endonucleolytic cleavage of RNA, removing 21 and 42 nucleotides, respectively, from the 5'- and 3'-termini of a 5S-rRNA precursor.. Functionally, required for correct processing of both the 5' and 3' ends of 5S rRNA precursor. Cleaves both sides of a double-stranded region yielding mature 5S rRNA in one step. This is Ribonuclease M5 from Clostridium botulinum (strain Hall / ATCC 3502 / NCTC 13319 / Type A).